Here is a 297-residue protein sequence, read N- to C-terminus: Carboxysome assembly protein CcmO (297 aa).

Residues 1 to 29 are disordered; it reads MPTSPTMTSVPIARSPRPSYQQINQHQPS. Residues 18–29 show a composition bias toward polar residues; that stretch reads PSYQQINQHQPS. 2 BMC domains span residues 32 to 116 and 138 to 222; these read ALGL…AVFP and SIGL…HTLP.

The protein belongs to the bacterial microcompartments protein family. In terms of assembly, homooligomerizes, possibly as a trimer, interacts with CcmK in the carboxysome.

It is found in the carboxysome. In terms of biological role, required for formation of the carboxysome, a polyhedral inclusion where RuBisCO (ribulose bisphosphate carboxylase, rbcL-rbcS) is sequestered. Required for recruitment of major shell protein CcmK2 to the pre-carboxysome. Suggested to be a carboxysome shell protein. This is Carboxysome assembly protein CcmO from Synechocystis sp. (strain ATCC 27184 / PCC 6803 / Kazusa).